Reading from the N-terminus, the 372-residue chain is NAD(P)H-quinone oxidoreductase subunit 1 (372 aa).

8 consecutive transmembrane segments (helical) span residues M27–V47, I97–V117, V128–M148, A166–M186, V204–L224, V266–V286, T308–L328, and F347–P367.

This sequence belongs to the complex I subunit 1 family. NDH-1 is composed of at least 11 different subunits.

It is found in the cellular thylakoid membrane. The enzyme catalyses a plastoquinone + NADH + (n+1) H(+)(in) = a plastoquinol + NAD(+) + n H(+)(out). It carries out the reaction a plastoquinone + NADPH + (n+1) H(+)(in) = a plastoquinol + NADP(+) + n H(+)(out). Its function is as follows. NDH-1 shuttles electrons from an unknown electron donor, via FMN and iron-sulfur (Fe-S) centers, to quinones in the respiratory and/or the photosynthetic chain. The immediate electron acceptor for the enzyme in this species is believed to be plastoquinone. Couples the redox reaction to proton translocation, and thus conserves the redox energy in a proton gradient. The chain is NAD(P)H-quinone oxidoreductase subunit 1 from Synechococcus sp. (strain CC9311).